The chain runs to 229 residues: Glycerol-3-phosphate acyltransferase (229 aa).

6 consecutive transmembrane segments (helical) span residues 2 to 22, 56 to 76, 93 to 113, 129 to 149, 151 to 171, and 178 to 198; these read WSLTVILLISYFLGSIPGALW, LATVVDFGKGFLAAGVVASVI, FVVLGLLAGVGAVIGHMYPIF, LFALTPLTMAITLAVFVAVLL, SRYVSLSSITAAVAFPTIVAL, and ADLDPSLLVFGGLLALSIVVA.

It belongs to the PlsY family. In terms of assembly, probably interacts with PlsX.

The protein resides in the cell inner membrane. It carries out the reaction an acyl phosphate + sn-glycerol 3-phosphate = a 1-acyl-sn-glycero-3-phosphate + phosphate. It participates in lipid metabolism; phospholipid metabolism. In terms of biological role, catalyzes the transfer of an acyl group from acyl-phosphate (acyl-PO(4)) to glycerol-3-phosphate (G3P) to form lysophosphatidic acid (LPA). This enzyme utilizes acyl-phosphate as fatty acyl donor, but not acyl-CoA or acyl-ACP. This Salinibacter ruber (strain DSM 13855 / M31) protein is Glycerol-3-phosphate acyltransferase.